The sequence spans 926 residues: Storkhead-box protein 2 (926 aa).

Disordered regions lie at residues 1–32 (MKKT…RSEK), 338–393 (EEEK…DIPG), 452–529 (EMPF…SYID), 564–586 (KEPS…PSYG), 633–693 (VKKL…SLDK), 723–802 (LLKS…VGTM), and 823–926 (TLLT…VTSV). The span at 18 to 32 (FSDRASDRMRSRSEK) shows a compositional bias: basic and acidic residues. A compositionally biased stretch (basic residues) spans 353 to 378 (HSGRSKKSRTHRKSHGKSRSHSKTRV). The segment covering 379–393 (SKGDPSDGSHLDIPG) has biased composition (basic and acidic residues). Residues 463 to 472 (SHSKVHRSHS) are compositionally biased toward basic residues. Residues 473-495 (HTQDRRSRNERSNKAKERSRSMD) show a composition bias toward basic and acidic residues. A compositionally biased stretch (polar residues) spans 518–529 (QDDQTPSQSYID). 2 stretches are compositionally biased toward basic and acidic residues: residues 633-658 (VKKL…EESP) and 684-693 (HSAEPSSLDK). The span at 746–769 (LGTSAAQAMPPSQRQQEPGGNQEA) shows a compositional bias: polar residues. A compositionally biased stretch (basic and acidic residues) spans 785–799 (GANKNAEEEKNRDDV). 2 stretches are compositionally biased toward polar residues: residues 847 to 884 (MDSS…QNPA) and 914 to 926 (KPSN…VTSV).

The protein is Storkhead-box protein 2 (Stox2) of Mus musculus (Mouse).